A 203-amino-acid polypeptide reads, in one-letter code: Thymidylate kinase (203 aa).

Gly-10 to Ser-17 contributes to the ATP binding site.

It belongs to the thymidylate kinase family.

It carries out the reaction dTMP + ATP = dTDP + ADP. Its function is as follows. Phosphorylation of dTMP to form dTDP in both de novo and salvage pathways of dTTP synthesis. The polypeptide is Thymidylate kinase (Methylobacillus flagellatus (strain ATCC 51484 / DSM 6875 / VKM B-1610 / KT)).